The sequence spans 349 residues: Heat-inducible transcription repressor HrcA (349 aa).

The protein belongs to the HrcA family.

Negative regulator of class I heat shock genes (grpE-dnaK-dnaJ and groELS operons). Prevents heat-shock induction of these operons. The polypeptide is Heat-inducible transcription repressor HrcA (Xylella fastidiosa (strain 9a5c)).